Here is a 199-residue protein sequence, read N- to C-terminus: Nitrile hydratase subunit alpha (199 aa).

Fe(3+)-binding residues include cysteine 102, cysteine 105, serine 106, and cysteine 107. Cysteine 105 is subject to Cysteine sulfinic acid (-SO2H). Cysteine sulfenic acid (-SOH) is present on cysteine 107.

This sequence belongs to the nitrile hydratase subunit alpha family. In terms of assembly, heterodimer of an alpha and a beta chain. Requires Fe(3+) as cofactor. Post-translationally, oxidation on Cys-105 is essential for the activity. Oxidation on Cys-107 stabilizes the Fe-NO ligand coordinated in the inactive form.

It catalyses the reaction an aliphatic primary amide = an aliphatic nitrile + H2O. Its activity is regulated as follows. Inactivated by oxidation of Cys-107 to a sulfenic acid. Its function is as follows. NHase catalyzes the hydration of various nitrile compounds to the corresponding amides. Industrial production of acrylamide is now being developed using some of the enzymes of this class. The chain is Nitrile hydratase subunit alpha (nthA) from Rhodococcus sp.